The primary structure comprises 410 residues: Elongation factor Tu (410 aa).

One can recognise a tr-type G domain in the interval 10–214; that stretch reads KPHVNIGTIG…EVDAYIPTPE (205 aa). The G1 stretch occupies residues 19-26; that stretch reads GHVDHGKT. A GTP-binding site is contributed by 19-26; that stretch reads GHVDHGKT. A Mg(2+)-binding site is contributed by T26. Residues 60 to 64 form a G2 region; the sequence is GITIN. Positions 81–84 are G3; sequence DCPG. GTP is bound by residues 81 to 85 and 136 to 139; these read DCPGH and NKED. Residues 136-139 form a G4 region; the sequence is NKED. Residues 174-176 are G5; sequence SAL.

This sequence belongs to the TRAFAC class translation factor GTPase superfamily. Classic translation factor GTPase family. EF-Tu/EF-1A subfamily. Monomer.

The protein resides in the cytoplasm. It catalyses the reaction GTP + H2O = GDP + phosphate + H(+). In terms of biological role, GTP hydrolase that promotes the GTP-dependent binding of aminoacyl-tRNA to the A-site of ribosomes during protein biosynthesis. This Gloeothece citriformis (strain PCC 7424) (Cyanothece sp. (strain PCC 7424)) protein is Elongation factor Tu.